Here is a 417-residue protein sequence, read N- to C-terminus: Serine hydroxymethyltransferase (417 aa).

(6S)-5,6,7,8-tetrahydrofolate is bound by residues L120 and 124–126 (GHL). K229 is subject to N6-(pyridoxal phosphate)lysine.

This sequence belongs to the SHMT family. In terms of assembly, homodimer. The cofactor is pyridoxal 5'-phosphate.

Its subcellular location is the cytoplasm. It catalyses the reaction (6R)-5,10-methylene-5,6,7,8-tetrahydrofolate + glycine + H2O = (6S)-5,6,7,8-tetrahydrofolate + L-serine. Its pathway is one-carbon metabolism; tetrahydrofolate interconversion. The protein operates within amino-acid biosynthesis; glycine biosynthesis; glycine from L-serine: step 1/1. Its function is as follows. Catalyzes the reversible interconversion of serine and glycine with tetrahydrofolate (THF) serving as the one-carbon carrier. This reaction serves as the major source of one-carbon groups required for the biosynthesis of purines, thymidylate, methionine, and other important biomolecules. Also exhibits THF-independent aldolase activity toward beta-hydroxyamino acids, producing glycine and aldehydes, via a retro-aldol mechanism. The protein is Serine hydroxymethyltransferase of Anaeromyxobacter sp. (strain Fw109-5).